The sequence spans 162 residues: Cyclic pyranopterin monophosphate synthase (162 aa).

Substrate-binding positions include 75 to 77 (LCH) and 113 to 114 (ME). Residue Asp128 is part of the active site.

It belongs to the MoaC family. As to quaternary structure, homohexamer; trimer of dimers.

The enzyme catalyses (8S)-3',8-cyclo-7,8-dihydroguanosine 5'-triphosphate = cyclic pyranopterin phosphate + diphosphate. It functions in the pathway cofactor biosynthesis; molybdopterin biosynthesis. Functionally, catalyzes the conversion of (8S)-3',8-cyclo-7,8-dihydroguanosine 5'-triphosphate to cyclic pyranopterin monophosphate (cPMP). The chain is Cyclic pyranopterin monophosphate synthase from Burkholderia ambifaria (strain MC40-6).